A 1047-amino-acid chain; its full sequence is Atrial natriuretic peptide receptor 2 (1047 aa).

The signal sequence occupies residues 1 to 16; that stretch reads MALPSLLLVVAALAGG. Residues 17 to 458 are Extracellular-facing; the sequence is VRPPGARNLT…DKTPLSTLAI (442 aa). N-linked (GlcNAc...) asparagine glycans are attached at residues Asn-24 and Asn-35. A disulfide bond links Cys-75 and Cys-101. Asn-161, Asn-195, Asn-244, Asn-277, and Asn-349 each carry an N-linked (GlcNAc...) asparagine glycan. Residues 459 to 478 form a helical membrane-spanning segment; that stretch reads VALGTGITFIMFGVSSFLIF. Over 479-1047 the chain is Cytoplasmic; sequence RKLMLEKELA…GERKGPAGLL (569 aa). The residue at position 513 (Ser-513) is a Phosphoserine. The Protein kinase domain occupies 513-786; it reads SRLTLSLRGS…PDFGQIKGFI (274 aa). The residue at position 516 (Thr-516) is a Phosphothreonine. Ser-518, Ser-522, Ser-523, and Ser-526 each carry phosphoserine. Position 529 is a phosphothreonine (Thr-529). The Guanylate cyclase domain occupies 861-991; sequence TIYFSDIVGF…DTVNTASRME (131 aa).

It belongs to the adenylyl cyclase class-4/guanylyl cyclase family. Post-translationally, phosphorylated. Phosphorylation of the protein kinase-like domain is required for full activation by CNP. Glycosylated.

It localises to the cell membrane. The enzyme catalyses GTP = 3',5'-cyclic GMP + diphosphate. Receptor for the C-type natriuretic peptide NPPC/CNP hormone. Has guanylate cyclase activity upon binding of its ligand. May play a role in the regulation of skeletal growth. The protein is Atrial natriuretic peptide receptor 2 (NPR2) of Bos taurus (Bovine).